The following is a 103-amino-acid chain: Small ribosomal subunit protein uS10 (103 aa).

The protein belongs to the universal ribosomal protein uS10 family. Part of the 30S ribosomal subunit.

Involved in the binding of tRNA to the ribosomes. This is Small ribosomal subunit protein uS10 from Helicobacter hepaticus (strain ATCC 51449 / 3B1).